A 206-amino-acid polypeptide reads, in one-letter code: Peroxynitrite isomerase (206 aa).

Positions 21 to 27 (GTWEGNG) match the GXWXGXG motif. His-190 serves as a coordination point for heme b.

Belongs to the nitrobindin family. In terms of assembly, homodimer. The cofactor is heme b.

It catalyses the reaction peroxynitrite = nitrate. The protein operates within nitrogen metabolism. In terms of biological role, heme-binding protein able to scavenge peroxynitrite and to protect free L-tyrosine against peroxynitrite-mediated nitration, by acting as a peroxynitrite isomerase that converts peroxynitrite to nitrate. Therefore, this protein likely plays a role in peroxynitrite sensing and in the detoxification of reactive nitrogen and oxygen species (RNS and ROS, respectively). Is able to bind nitric oxide (NO) in vitro, but may act as a sensor of peroxynitrite levels in vivo. In Kocuria rhizophila (strain ATCC 9341 / DSM 348 / NBRC 103217 / DC2201), this protein is Peroxynitrite isomerase.